The chain runs to 939 residues: Valine--tRNA ligase (939 aa).

A 'HIGH' region motif is present at residues 47 to 57 (PNVTGILHMGH). Residues 563–567 (KLSKS) carry the 'KMSKS' region motif. Lysine 566 provides a ligand contact to ATP. Positions 874-939 (EHLAKERVRL…QSILDKLASL (66 aa)) form a coiled coil.

It belongs to the class-I aminoacyl-tRNA synthetase family. ValS type 1 subfamily. As to quaternary structure, monomer.

The protein resides in the cytoplasm. The enzyme catalyses tRNA(Val) + L-valine + ATP = L-valyl-tRNA(Val) + AMP + diphosphate. Catalyzes the attachment of valine to tRNA(Val). As ValRS can inadvertently accommodate and process structurally similar amino acids such as threonine, to avoid such errors, it has a 'posttransfer' editing activity that hydrolyzes mischarged Thr-tRNA(Val) in a tRNA-dependent manner. This is Valine--tRNA ligase from Chlamydia trachomatis serovar L2b (strain UCH-1/proctitis).